A 635-amino-acid chain; its full sequence is Probable ethylene response sensor 2 (635 aa).

Transmembrane regions (helical) follow at residues 24-44, 59-79, and 94-114; these read ISDF…IYFV, FGAF…TFAI, and ATAV…PDLL. Cu cation contacts are provided by Cys66 and His70. One can recognise a GAF domain in the interval 159 to 308; it reads DRHTILRTTL…VVADQVAVAL (150 aa). Residues 351-589 form the Histidine kinase domain; the sequence is VMNHEMRTPM…MFFVKLGMPE (239 aa). His354 carries the post-translational modification Phosphohistidine; by autocatalysis.

The protein belongs to the ethylene receptor family. Homodimer. Cu cation is required as a cofactor. In terms of tissue distribution, expressed in anthers and hulls.

It localises to the endoplasmic reticulum membrane. It carries out the reaction ATP + protein L-histidine = ADP + protein N-phospho-L-histidine.. Its function is as follows. Ethylene receptor related to bacterial two-component regulators. Acts as a negative regulator of ethylene signaling. May play a role in the regulation of flowering by up-regulating GI (GIGANTEA) and RCN1 and regulate starch accumulation by down-regulating the alpha-amylase AMY3D. This is Probable ethylene response sensor 2 from Oryza sativa subsp. indica (Rice).